Reading from the N-terminus, the 83-residue chain is Non-muscle caldesmon (83 aa).

Composition is skewed to basic and acidic residues over residues 1 to 44 and 62 to 76; these read QTSE…KEEK and NQLK…KESK. The myosin and calmodulin-binding stretch occupies residues 1–63; it reads QTSEKEGRSE…PKPGSIEENQ (63 aa). The disordered stretch occupies residues 1–83; it reads QTSEKEGRSE…ESKNILSLCL (83 aa).

Post-translationally, in non-muscle cells, phosphorylation by CDC2 during mitosis causes caldesmon to dissociate from microfilaments. Phosphorylation reduces caldesmon binding to actin, myosin, and calmodulin as well as its inhibition of actomyosin ATPase activity. Phosphorylation also occurs in both quiescent and dividing smooth muscle cells with similar effects on the interaction with actin and calmodulin and on microfilaments reorganization.

Its subcellular location is the cytoplasm. The protein resides in the cytoskeleton. It is found in the myofibril. It localises to the stress fiber. Functionally, actin- and myosin-binding protein implicated in the regulation of actomyosin interactions in smooth muscle and nonmuscle cells (could act as a bridge between myosin and actin filaments). Stimulates actin binding of tropomyosin which increases the stabilization of actin filament structure. In muscle tissues, inhibits the actomyosin ATPase by binding to F-actin. This inhibition is attenuated by calcium-calmodulin and is potentiated by tropomyosin. Interacts with actin, myosin, two molecules of tropomyosin and with calmodulin. Also plays an essential role during cellular mitosis and receptor capping. This is Non-muscle caldesmon (CALD1) from Bos taurus (Bovine).